Consider the following 227-residue polypeptide: Prolactin-5A1 (227 aa).

A signal peptide spans 1 to 27; the sequence is MQIQPHPSGALLLLLLSNLLMWENVAS. Asn47 carries an N-linked (GlcNAc...) asparagine glycan. A disulfide bridge connects residues Cys85 and Cys204.

It belongs to the somatotropin/prolactin family. Expressed specifically in placenta. Highly expressed in invasive trophoblast cells lining the central placental vessel.

Its subcellular location is the secreted. The polypeptide is Prolactin-5A1 (Prl5a1) (Rattus norvegicus (Rat)).